A 153-amino-acid chain; its full sequence is UPF0311 protein RPA1785 (153 aa).

It belongs to the UPF0311 family.

The polypeptide is UPF0311 protein RPA1785 (Rhodopseudomonas palustris (strain ATCC BAA-98 / CGA009)).